A 399-amino-acid chain; its full sequence is Elongation factor Tu (399 aa).

The tr-type G domain maps to 10–204 (KPHVNIGTIG…AVDANIPEPV (195 aa)). Residues 19-26 (GHVDHGKT) are G1. GTP is bound at residue 19–26 (GHVDHGKT). Threonine 26 contacts Mg(2+). The G2 stretch occupies residues 60–64 (GITIN). A G3 region spans residues 81–84 (DCPG). Residues 81 to 85 (DCPGH) and 136 to 139 (NKCD) contribute to the GTP site. The interval 136–139 (NKCD) is G4. A G5 region spans residues 174–176 (SGL).

It belongs to the TRAFAC class translation factor GTPase superfamily. Classic translation factor GTPase family. EF-Tu/EF-1A subfamily. As to quaternary structure, monomer.

It localises to the cytoplasm. It catalyses the reaction GTP + H2O = GDP + phosphate + H(+). Functionally, GTP hydrolase that promotes the GTP-dependent binding of aminoacyl-tRNA to the A-site of ribosomes during protein biosynthesis. In Synechococcus sp. (strain RCC307), this protein is Elongation factor Tu.